The primary structure comprises 200 residues: Ras-related protein Rab-7b (200 aa).

Residues 15 to 22 (GALGVGKT), 34 to 40 (YEDYQTT), 63 to 67 (DTGGQ), 124 to 127 (NKID), and 154 to 155 (AK) each bind GTP. Short sequence motifs (switch) lie at residues 28–41 (YVHK…QTTL) and 67–82 (QERF…KGSD). Ser-186 carries the post-translational modification Phosphoserine. 2 S-geranylgeranyl cysteine lipidation sites follow: Cys-199 and Cys-200.

The protein belongs to the small GTPase superfamily. Rab family.

The protein resides in the late endosome. The protein localises to the lysosome. It localises to the golgi apparatus. It is found in the trans-Golgi network. Its subcellular location is the cytoplasmic vesicle. The protein resides in the phagosome. The protein localises to the phagosome membrane. Its function is as follows. Controls vesicular trafficking from endosomes to the trans-Golgi network (TGN). Acts as a negative regulator of TLR9 signaling and can suppress TLR9-triggered TNFA, IL6, and IFNB production in macrophages by promoting TLR9 lysosomal degradation. Also negatively regulates TLR4 signaling in macrophages by promoting lysosomal degradation of TLR4. Promotes megakaryocytic differentiation by increasing NF-kappa-B-dependent IL6 production and subsequently enhancing the association of STAT3 with GATA1. Not involved in the regulation of the EGF- and EGFR degradation pathway. The sequence is that of Ras-related protein Rab-7b (RAB7B) from Bos taurus (Bovine).